A 209-amino-acid polypeptide reads, in one-letter code: Octanoyltransferase (209 aa).

The 180-residue stretch at 30–209 (DHEPEIIYLV…IQTEFNKIFK (180 aa)) folds into the BPL/LPL catalytic domain. Substrate-binding positions include 69–76 (RGGKFTFH), 143–145 (AIG), and 156–158 (GVA). Cysteine 174 serves as the catalytic Acyl-thioester intermediate.

Belongs to the LipB family.

Its subcellular location is the cytoplasm. The enzyme catalyses octanoyl-[ACP] + L-lysyl-[protein] = N(6)-octanoyl-L-lysyl-[protein] + holo-[ACP] + H(+). It functions in the pathway protein modification; protein lipoylation via endogenous pathway; protein N(6)-(lipoyl)lysine from octanoyl-[acyl-carrier-protein]: step 1/2. Its function is as follows. Catalyzes the transfer of endogenously produced octanoic acid from octanoyl-acyl-carrier-protein onto the lipoyl domains of lipoate-dependent enzymes. Lipoyl-ACP can also act as a substrate although octanoyl-ACP is likely to be the physiological substrate. This chain is Octanoyltransferase, found in Rickettsia africae (strain ESF-5).